A 1019-amino-acid polypeptide reads, in one-letter code: Type VI secretion system spike protein VgrG2b (1019 aa).

A disordered region spans residues 268 to 291 (AGRPFTESRLRGHRRDARVASVSG). Residue His935 participates in Zn(2+) binding. Glu936 is a catalytic residue. 2 residues coordinate Zn(2+): His939 and Glu983.

The protein belongs to the VgrG protein family. As to quaternary structure, interacts with Tla3; this interaction promotes Tle3 loading onto VgrG2b. Interacts with host gamma-tubulin ring complex components GCP1 and GCP4. Requires Zn(2+) as cofactor.

Its subcellular location is the secreted. In terms of biological role, part of the H2 type VI secretion system (H2-T6SS) specialized secretion system, which delivers several virulence factors in both prokaryotic and eukaryotic cells during infection. Forms the spike at the tip of the elongating tube probably formed by haemolysin co-regulated protein 2b/Hcp2b. Allows the delivery of the Tle3 antibacterial toxin to target cells where it exerts its toxicity. Additionally, acts directly as an effector and promotes internalization by interacting with the host gamma-tubulin ring complex. Elicits toxicity also in the bacterial periplasm and disrupts bacterial cell morphology. Toxicity is counteracted by a cognate immunity protein. This is Type VI secretion system spike protein VgrG2b (vgrG2b) from Pseudomonas aeruginosa (strain ATCC 15692 / DSM 22644 / CIP 104116 / JCM 14847 / LMG 12228 / 1C / PRS 101 / PAO1).